Reading from the N-terminus, the 369-residue chain is Probable dual-specificity RNA methyltransferase RlmN (369 aa).

Glu108 acts as the Proton acceptor in catalysis. Residues 114–357 (YPDRATVCIS…CTVRDTRGQE (244 aa)) enclose the Radical SAM core domain. A disulfide bridge connects residues Cys121 and Cys362. Cys128, Cys132, and Cys135 together coordinate [4Fe-4S] cluster. S-adenosyl-L-methionine-binding positions include 183 to 184 (GE), Ser217, 240 to 242 (SLH), and Asn319. Catalysis depends on Cys362, which acts as the S-methylcysteine intermediate.

This sequence belongs to the radical SAM superfamily. RlmN family. Requires [4Fe-4S] cluster as cofactor.

Its subcellular location is the cytoplasm. It catalyses the reaction adenosine(2503) in 23S rRNA + 2 reduced [2Fe-2S]-[ferredoxin] + 2 S-adenosyl-L-methionine = 2-methyladenosine(2503) in 23S rRNA + 5'-deoxyadenosine + L-methionine + 2 oxidized [2Fe-2S]-[ferredoxin] + S-adenosyl-L-homocysteine. The enzyme catalyses adenosine(37) in tRNA + 2 reduced [2Fe-2S]-[ferredoxin] + 2 S-adenosyl-L-methionine = 2-methyladenosine(37) in tRNA + 5'-deoxyadenosine + L-methionine + 2 oxidized [2Fe-2S]-[ferredoxin] + S-adenosyl-L-homocysteine. Functionally, specifically methylates position 2 of adenine 2503 in 23S rRNA and position 2 of adenine 37 in tRNAs. The sequence is that of Probable dual-specificity RNA methyltransferase RlmN from Saccharopolyspora erythraea (strain ATCC 11635 / DSM 40517 / JCM 4748 / NBRC 13426 / NCIMB 8594 / NRRL 2338).